A 429-amino-acid polypeptide reads, in one-letter code: Serine--tRNA ligase (429 aa).

235 to 237 is an L-serine binding site; sequence TAE. 266–268 lines the ATP pocket; sequence RSE. Glu-289 lines the L-serine pocket. 353–356 serves as a coordination point for ATP; that stretch reads EISS. Ser-389 contacts L-serine.

This sequence belongs to the class-II aminoacyl-tRNA synthetase family. Type-1 seryl-tRNA synthetase subfamily. Homodimer. The tRNA molecule binds across the dimer.

Its subcellular location is the cytoplasm. It catalyses the reaction tRNA(Ser) + L-serine + ATP = L-seryl-tRNA(Ser) + AMP + diphosphate + H(+). The enzyme catalyses tRNA(Sec) + L-serine + ATP = L-seryl-tRNA(Sec) + AMP + diphosphate + H(+). Its pathway is aminoacyl-tRNA biosynthesis; selenocysteinyl-tRNA(Sec) biosynthesis; L-seryl-tRNA(Sec) from L-serine and tRNA(Sec): step 1/1. Its function is as follows. Catalyzes the attachment of serine to tRNA(Ser). Is also able to aminoacylate tRNA(Sec) with serine, to form the misacylated tRNA L-seryl-tRNA(Sec), which will be further converted into selenocysteinyl-tRNA(Sec). The chain is Serine--tRNA ligase from Histophilus somni (strain 2336) (Haemophilus somnus).